A 172-amino-acid chain; its full sequence is Adenine phosphoribosyltransferase (172 aa).

The protein belongs to the purine/pyrimidine phosphoribosyltransferase family. As to quaternary structure, homodimer.

It localises to the cytoplasm. The enzyme catalyses AMP + diphosphate = 5-phospho-alpha-D-ribose 1-diphosphate + adenine. It participates in purine metabolism; AMP biosynthesis via salvage pathway; AMP from adenine: step 1/1. Functionally, catalyzes a salvage reaction resulting in the formation of AMP, that is energically less costly than de novo synthesis. This is Adenine phosphoribosyltransferase from Staphylococcus aureus (strain Mu3 / ATCC 700698).